The following is an 861-amino-acid chain: Leucine--tRNA ligase (861 aa).

The 'HIGH' region signature appears at 42 to 52 (PYPSGRLHMGH). The short motif at 619 to 623 (KMSKS) is the 'KMSKS' region element. K622 contacts ATP.

The protein belongs to the class-I aminoacyl-tRNA synthetase family.

The protein localises to the cytoplasm. It carries out the reaction tRNA(Leu) + L-leucine + ATP = L-leucyl-tRNA(Leu) + AMP + diphosphate. The protein is Leucine--tRNA ligase of Haemophilus influenzae (strain ATCC 51907 / DSM 11121 / KW20 / Rd).